A 331-amino-acid chain; its full sequence is UPF0324 membrane protein SA0329 (331 aa).

A run of 11 helical transmembrane segments spans residues 9-26 (FMIGLSLTFIVALFSFLA), 31-48 (ILDKVGALTIAILIAILY), 69-88 (LLRFAIILYGLKLNIFDIIG), 93-115 (LLAIDVGVVIFSIVMMLFVNKLL), 122-144 (ALLLGVGTGVCGAAAIAAVAPIF), 154-176 (SIGIIALIGTIFSLIYTAIYAIF), 183-202 (YGAWSGVSLHEIAHVVLAGG), 217-234 (LGRVFLLIPLTIVLILIM), 247-269 (ISIPYFLIGFVIMALVNTYVTIP), 273-295 (LNILNTISTICLLMAMVALGLNV), and 308-330 (LMTIIITSICLSSLAFIVVHWLY).

It belongs to the UPF0324 family.

The protein localises to the cell membrane. This is UPF0324 membrane protein SA0329 from Staphylococcus aureus (strain N315).